A 243-amino-acid chain; its full sequence is Exosome complex component Rrp41 (243 aa).

Belongs to the RNase PH family. Rrp41 subfamily. As to quaternary structure, component of the archaeal exosome complex. Forms a hexameric ring-like arrangement composed of 3 Rrp41-Rrp42 heterodimers. The hexameric ring associates with a trimer of Rrp4 and/or Csl4 subunits.

Its subcellular location is the cytoplasm. Catalytic component of the exosome, which is a complex involved in RNA degradation. Has 3'-&gt;5' exoribonuclease activity. Can also synthesize heteromeric RNA-tails. The chain is Exosome complex component Rrp41 from Cenarchaeum symbiosum (strain A).